A 181-amino-acid polypeptide reads, in one-letter code: 6,7-dimethyl-8-ribityllumazine synthase (181 aa).

5-amino-6-(D-ribitylamino)uracil contacts are provided by residues Phe-24, Ser-62–Glu-64, and Ala-86–Ile-88. Gln-91–Thr-92 serves as a coordination point for (2S)-2-hydroxy-3-oxobutyl phosphate. His-94 (proton donor) is an active-site residue. Residue Phe-119 participates in 5-amino-6-(D-ribitylamino)uracil binding. (2S)-2-hydroxy-3-oxobutyl phosphate is bound at residue Arg-133.

It belongs to the DMRL synthase family.

The enzyme catalyses (2S)-2-hydroxy-3-oxobutyl phosphate + 5-amino-6-(D-ribitylamino)uracil = 6,7-dimethyl-8-(1-D-ribityl)lumazine + phosphate + 2 H2O + H(+). Its pathway is cofactor biosynthesis; riboflavin biosynthesis; riboflavin from 2-hydroxy-3-oxobutyl phosphate and 5-amino-6-(D-ribitylamino)uracil: step 1/2. Catalyzes the formation of 6,7-dimethyl-8-ribityllumazine by condensation of 5-amino-6-(D-ribitylamino)uracil with 3,4-dihydroxy-2-butanone 4-phosphate. This is the penultimate step in the biosynthesis of riboflavin. In Microcystis aeruginosa (strain NIES-843 / IAM M-2473), this protein is 6,7-dimethyl-8-ribityllumazine synthase.